The following is a 290-amino-acid chain: Cilia- and flagella-associated protein 298 (290 aa).

It belongs to the CFAP298 family. As to quaternary structure, interacts with ZMYND10.

It localises to the cytoplasm. The protein resides in the cytoskeleton. The protein localises to the cilium basal body. In terms of biological role, plays a role in motile cilium function, possibly by acting on outer dynein arm assembly. Seems to be important for initiation rather than maintenance of cilium motility. Required for correct positioning of cilia at the apical cell surface, suggesting an additional role in the planar cell polarity (PCP) pathway. May suppress canonical Wnt signaling activity. In Mus musculus (Mouse), this protein is Cilia- and flagella-associated protein 298.